A 290-amino-acid chain; its full sequence is 4-hydroxybenzoate octaprenyltransferase (290 aa).

A run of 8 helical transmembrane segments spans residues 23–43 (IGALLLLWPTLWALWVATPGV), 46–66 (LWILAVFVAGVWLMRAAGCVV), 99–119 (LFVVLVLISFLLVLTLNTMTI), 141–161 (LPQVVLGAAFGWSIPMAFAAV), 163–183 (ESVPLSCWLMFLANILWAVAY), 213–233 (LIIGILQIGVLALMAIIGELN), 234–254 (GLGWGYYWSILVAGALFVYQQ), and 268–288 (AFMNNNYVGLVLFLGLAMSYW).

Belongs to the UbiA prenyltransferase family. The cofactor is Mg(2+).

It localises to the cell inner membrane. The enzyme catalyses all-trans-octaprenyl diphosphate + 4-hydroxybenzoate = 4-hydroxy-3-(all-trans-octaprenyl)benzoate + diphosphate. The protein operates within cofactor biosynthesis; ubiquinone biosynthesis. Catalyzes the prenylation of para-hydroxybenzoate (PHB) with an all-trans polyprenyl group. Mediates the second step in the final reaction sequence of ubiquinone-8 (UQ-8) biosynthesis, which is the condensation of the polyisoprenoid side chain with PHB, generating the first membrane-bound Q intermediate 3-octaprenyl-4-hydroxybenzoate. The polypeptide is 4-hydroxybenzoate octaprenyltransferase (Escherichia coli O6:K15:H31 (strain 536 / UPEC)).